Here is a 257-residue protein sequence, read N- to C-terminus: Major prion protein (257 aa).

An N-terminal signal peptide occupies residues 1–24 (MVKSHIGSWLLVLFVATWSDIGFC). Residues 25–41 (KKRPKPGGGWNTGGSRY) form an interaction with ADGRG6 region. An interaction with GRB2, ERI3 and SYN1 region spans residues 25 to 234 (KKRPKPGGGW…ESEAYYQRGA (210 aa)). Residues 27–114 (RPKPGGGWNT…KPSKPKTNMK (88 aa)) form a disordered region. Repeat copies occupy residues 54-62 (PQGGGGWGQ), 63-70 (PHGGGWGQ), 71-78 (PHGGGWGQ), 79-86 (PHGGGWGQ), and 87-95 (PHGGGGWGQ). The interval 54–95 (PQGGGGWGQPHGGGWGQPHGGGWGQPHGGGWGQPHGGGGWGQ) is 5 X 8 AA tandem repeats of P-H-G-G-G-W-G-Q. The span at 55 to 101 (QGGGGWGQPHGGGWGQPHGGGWGQPHGGGWGQPHGGGGWGQGGGSHG) shows a compositional bias: gly residues. 12 residues coordinate Cu(2+): H64, G65, G66, H72, G73, G74, H80, G81, G82, H88, G90, and G91. A disulfide bridge connects residues C183 and C218. N185 and N201 each carry an N-linked (GlcNAc...) asparagine glycan. A lipid anchor (GPI-anchor amidated alanine) is attached at A234. Residues 235 to 257 (SAILFSPPPVILLISLLILLIVG) constitute a propeptide, removed in mature form.

This sequence belongs to the prion family. In terms of assembly, monomer and homodimer. Has a tendency to aggregate into amyloid fibrils containing a cross-beta spine, formed by a steric zipper of superposed beta-strands. Soluble oligomers may represent an intermediate stage on the path to fibril formation. Copper binding may promote oligomerization. Interacts with GRB2, APP, ERI3/PRNPIP and SYN1. Mislocalized cytosolically exposed PrP interacts with MGRN1; this interaction alters MGRN1 subcellular location and causes lysosomal enlargement. Interacts with APP. Interacts with KIAA1191. Interacts with ADGRG6.

The protein localises to the cell membrane. The protein resides in the golgi apparatus. Functionally, its primary physiological function is unclear. May play a role in neuronal development and synaptic plasticity. May be required for neuronal myelin sheath maintenance. May promote myelin homeostasis through acting as an agonist for ADGRG6 receptor. May play a role in iron uptake and iron homeostasis. Soluble oligomers are toxic to cultured neuroblastoma cells and induce apoptosis (in vitro). Association with GPC1 (via its heparan sulfate chains) targets PRNP to lipid rafts. Also provides Cu(2+) or Zn(2+) for the ascorbate-mediated GPC1 deaminase degradation of its heparan sulfate side chains. The polypeptide is Major prion protein (PRNP) (Neovison vison (American mink)).